The sequence spans 839 residues: Autophagy-related protein 9A (839 aa).

The tract at residues 1–20 (MAQFDTEYQRLEASYSDSPP) is disordered. An N-acetylalanine modification is found at Ala2. Over 2–61 (AQFDTEYQRLEASYSDSPPGEEDLLVHVAEGSKSPWHHIENLDLFFSRVYNLHQKNGFTC) the chain is Cytoplasmic. The Tyrosine-based sorting signal signature appears at 8–11 (YQRL). Residues Ser14, Ser16, and Ser18 each carry the phosphoserine modification. The chain crosses the membrane as a helical span at residues 62–84 (MLIGEIFELMQFLFVVAFTTFLV). Residues 85–128 (SCVDYDILFANKMVNHSLHPTEPVKVTLPDAFLPAQVCSARIQE) lie on the Lumenal side of the membrane. The N-linked (GlcNAc...) asparagine glycan is linked to Asn99. The chain crosses the membrane as a helical span at residues 129-154 (NGSLITILVIAGVFWIHRLIKFIYNI). Residues 155–290 (CCYWEIHSFY…ELAQRLSNRI (136 aa)) are Cytoplasmic-facing. An intramembrane segment occupies 291-301 (LWIGIANFLLC). Topologically, residues 302–319 (PLILIWQILYAFFSYAEV) are cytoplasmic. An intramembrane segment occupies 320–328 (LKREPGALG). Topologically, residues 329-371 (ARCWSLYGRCYLRHFNELEHELQSRLNRGYKPASKYMNCFLSP) are cytoplasmic. A helical membrane pass occupies residues 372-397 (LLTLLAKNGAFFAGSILAVLIALTIY). The Lumenal segment spans residues 398–406 (DEDVLAVEH). A helical membrane pass occupies residues 407–424 (VLTTVTLLGVTVTVCRSF). At 425-470 (IPDQHMVFCPEQLLRVILAHIHYMPDHWQGNAHRSQTRDEFAQLFQ) the chain is on the cytoplasmic side. An intramembrane segment occupies 471–480 (YKAVFILEEL). The Cytoplasmic segment spans residues 481-483 (LSP). Residues 484 to 492 (IVTPLILIF) lie within the membrane without spanning it. At 493–839 (CLRPRALEII…DELPPQVHKV (347 aa)) the chain is on the cytoplasmic side. Phosphoserine is present on residues Ser656, Ser735, Ser738, Ser741, and Ser828. Disordered regions lie at residues 656 to 686 (SPLQ…SSGS) and 719 to 839 (QQAQ…VHKV). Residues 724-736 (EPERHLWHRRESD) are compositionally biased toward basic and acidic residues. Acidic residues-rich tracts occupy residues 737–747 (ESGESAPDEGG) and 823–832 (VPEEGSEDEL).

Belongs to the ATG9 family. As to quaternary structure, homotrimer; forms a homotrimer with a central pore that forms a path between the two membrane leaflets. Interacts (via cytoplasmic its C-terminus) with ATG2A. Interacts with SUPT20H. Interacts (via the tyrosine-based sorting signal motif) with AP4M1; promoting association with the AP-4 complex. Interacts with ARFIP1 and ARFIP2. Interacts with PI4K2A and PI4KB. Interacts with ATG4A; the interaction is direct and promotes ATG9A trafficking. Post-translationally, ufmylated in a DDRGK1 dependent manner.

Its subcellular location is the preautophagosomal structure membrane. It localises to the cytoplasmic vesicle. The protein localises to the autophagosome membrane. The protein resides in the golgi apparatus. It is found in the trans-Golgi network membrane. Its subcellular location is the late endosome membrane. It localises to the recycling endosome membrane. The protein localises to the endoplasmic reticulum membrane. The protein resides in the mitochondrion membrane. The enzyme catalyses a 1,2-diacyl-sn-glycero-3-phosphocholine(in) = a 1,2-diacyl-sn-glycero-3-phosphocholine(out). The catalysed reaction is a 1,2-diacyl-sn-glycero-3-phospho-L-serine(in) = a 1,2-diacyl-sn-glycero-3-phospho-L-serine(out). It carries out the reaction a 1,2-diacyl-sn-glycero-3-phosphoethanolamine(in) = a 1,2-diacyl-sn-glycero-3-phosphoethanolamine(out). Functionally, phospholipid scramblase involved in autophagy by mediating autophagosomal membrane expansion. Cycles between the preautophagosomal structure/phagophore assembly site (PAS) and the cytoplasmic vesicle pool and supplies membrane for the growing autophagosome. Lipid scramblase activity plays a key role in preautophagosomal structure/phagophore assembly by distributing the phospholipids that arrive through ATG2 (ATG2A or ATG2B) from the cytoplasmic to the luminal leaflet of the bilayer, thereby driving autophagosomal membrane expansion. Also required to supply phosphatidylinositol 4-phosphate to the autophagosome initiation site by recruiting the phosphatidylinositol 4-kinase beta (PI4KB) in a process dependent on ARFIP2, but not ARFIP1. In addition to autophagy, also plays a role in necrotic cell death. The chain is Autophagy-related protein 9A from Pongo abelii (Sumatran orangutan).